The chain runs to 56 residues: Ferredoxin (56 aa).

4Fe-4S ferredoxin-type domains follow at residues 2–28 (AYKILDTCVSCGACAAECPVDAISQGD) and 29–56 (TQFVIDADTCIDCGNCANVCPVGAPVQE). Positions 9, 12, 15, 19, 38, 41, 44, and 48 each coordinate [4Fe-4S] cluster.

Requires [4Fe-4S] cluster as cofactor.

Functionally, ferredoxins are iron-sulfur proteins that transfer electrons in a wide variety of metabolic reactions. The polypeptide is Ferredoxin (fer) (Clostridium perfringens (strain 13 / Type A)).